The following is a 281-amino-acid chain: Pantothenate synthetase (281 aa).

30 to 37 lines the ATP pocket; the sequence is MGYLHEGH. Catalysis depends on His-37, which acts as the Proton donor. Gln-61 is a binding site for (R)-pantoate. Gln-61 is a binding site for beta-alanine. 147-150 contributes to the ATP binding site; that stretch reads GEKD. Residue Gln-153 coordinates (R)-pantoate. Residues Ile-176 and 184 to 187 each bind ATP; that span reads KSSR.

Belongs to the pantothenate synthetase family. In terms of assembly, homodimer.

It is found in the cytoplasm. It catalyses the reaction (R)-pantoate + beta-alanine + ATP = (R)-pantothenate + AMP + diphosphate + H(+). The protein operates within cofactor biosynthesis; (R)-pantothenate biosynthesis; (R)-pantothenate from (R)-pantoate and beta-alanine: step 1/1. In terms of biological role, catalyzes the condensation of pantoate with beta-alanine in an ATP-dependent reaction via a pantoyl-adenylate intermediate. In Clostridium botulinum (strain Okra / Type B1), this protein is Pantothenate synthetase.